Reading from the N-terminus, the 111-residue chain is Large ribosomal subunit protein uL22 (111 aa).

This sequence belongs to the universal ribosomal protein uL22 family. Part of the 50S ribosomal subunit.

In terms of biological role, this protein binds specifically to 23S rRNA; its binding is stimulated by other ribosomal proteins, e.g. L4, L17, and L20. It is important during the early stages of 50S assembly. It makes multiple contacts with different domains of the 23S rRNA in the assembled 50S subunit and ribosome. Its function is as follows. The globular domain of the protein is located near the polypeptide exit tunnel on the outside of the subunit, while an extended beta-hairpin is found that lines the wall of the exit tunnel in the center of the 70S ribosome. The sequence is that of Large ribosomal subunit protein uL22 from Geotalea uraniireducens (strain Rf4) (Geobacter uraniireducens).